Here is a 145-residue protein sequence, read N- to C-terminus: Acidic phospholipase A2 (145 aa).

An N-terminal signal peptide occupies residues 1 to 21; sequence MYPAHLLVLLAVCVSLLGAAS. Positions 22–27 are excised as a propeptide; the sequence is IPPLPL. Disulfide bonds link Cys-38–Cys-98, Cys-54–Cys-144, Cys-56–Cys-72, Cys-71–Cys-125, Cys-78–Cys-118, Cys-87–Cys-111, and Cys-105–Cys-116. Ca(2+)-binding residues include Tyr-55 and Gly-57. Residue His-75 is part of the active site. Asp-76 lines the Ca(2+) pocket. Residue Asp-119 is part of the active site.

It belongs to the phospholipase A2 family. Group I subfamily. D49 sub-subfamily. It depends on Ca(2+) as a cofactor. As to expression, expressed by the venom gland.

It is found in the secreted. The enzyme catalyses a 1,2-diacyl-sn-glycero-3-phosphocholine + H2O = a 1-acyl-sn-glycero-3-phosphocholine + a fatty acid + H(+). Functionally, PLA2 catalyzes the calcium-dependent hydrolysis of the 2-acyl groups in 3-sn-phosphoglycerides. The sequence is that of Acidic phospholipase A2 from Notechis scutatus scutatus (Mainland tiger snake).